The primary structure comprises 257 residues: MAIHPTAIVEAGAQVDPSCEIGPFAVIGPLVRMGPGNSVGPHAVVTGRTTLGASNRIFPHAVIGGIPQDLKYRGEDTALVIGDRNTFREFATVNLGTAGGGGVTRIGSGGLFMASSHIGHDCQVGDGAIIANSVAIAGHVLIEDHVHFGGLSASHQFCRVGRLAFVGGMTGVAMDVAPYCTVAGARGELAGLNAIGMQRAGLTEEQIGRVKQAYKIVFRSSLGLAEAIAQLEAELAGHPETDHFIAFLKGSQRGITR.

The protein belongs to the transferase hexapeptide repeat family. LpxA subfamily. Homotrimer.

The protein resides in the cytoplasm. It catalyses the reaction a (3R)-hydroxyacyl-[ACP] + UDP-N-acetyl-alpha-D-glucosamine = a UDP-3-O-[(3R)-3-hydroxyacyl]-N-acetyl-alpha-D-glucosamine + holo-[ACP]. It participates in glycolipid biosynthesis; lipid IV(A) biosynthesis; lipid IV(A) from (3R)-3-hydroxytetradecanoyl-[acyl-carrier-protein] and UDP-N-acetyl-alpha-D-glucosamine: step 1/6. In terms of biological role, involved in the biosynthesis of lipid A, a phosphorylated glycolipid that anchors the lipopolysaccharide to the outer membrane of the cell. The chain is Acyl-[acyl-carrier-protein]--UDP-N-acetylglucosamine O-acyltransferase from Anaeromyxobacter sp. (strain K).